Here is a 428-residue protein sequence, read N- to C-terminus: CRS2-associated factor 1, mitochondrial (428 aa).

The N-terminal 21 residues, 1–21, are a transit peptide targeting the mitochondrion; it reads MLLLAGLLRRARPPRRPSVRR. 2 disordered regions span residues 33 to 100 and 129 to 152; these read PPAS…REPK and HADD…RERV. CRM domains are found at residues 155–253 and 275–371; these read EPLT…KRPV and EGLT…IQDN. The tract at residues 378–428 is disordered; it reads SVLEEESAGAESENGDQEQASSDWASDECSQLSSSDEMPDDKSAISEADSD. Acidic residues predominate over residues 380–393; that stretch reads LEEESAGAESENGD. A compositionally biased stretch (polar residues) spans 394 to 413; that stretch reads QEQASSDWASDECSQLSSSD.

Part of large ribonucleo-protein complexes that include group IIB introns.

The protein localises to the mitochondrion. Its function is as follows. May be involved in the splicing of group IIB introns in mitochondria. The sequence is that of CRS2-associated factor 1, mitochondrial from Oryza sativa subsp. japonica (Rice).